A 142-amino-acid polypeptide reads, in one-letter code: Transcriptional regulator MraZ (142 aa).

SpoVT-AbrB domains are found at residues 5–47 (EYQH…TINE) and 76–119 (ACIV…SREK).

This sequence belongs to the MraZ family. In terms of assembly, forms oligomers.

It localises to the cytoplasm. The protein localises to the nucleoid. The sequence is that of Transcriptional regulator MraZ from Clostridium botulinum (strain Alaska E43 / Type E3).